A 299-amino-acid chain; its full sequence is Putative arsenical pump-driving ATPase 2 (299 aa).

8 to 15 (GKGGVGKT) is a binding site for ATP.

The protein belongs to the arsA ATPase family.

The catalysed reaction is arsenite(in) + ATP + H2O = arsenite(out) + ADP + phosphate + H(+). Anion-transporting ATPase. Catalyzes the extrusion of arsenite. This is Putative arsenical pump-driving ATPase 2 (arsA2) from Aquifex aeolicus (strain VF5).